We begin with the raw amino-acid sequence, 134 residues long: MSWQAYVDDHLMCDIEGHEGHRLTAAAIVGHDGSVWAQSATFPQFKPEEMNGIMTDFNEPGHLAPTGLHLGGTKYMVIQGEAGAVIRGKKGSGGITIKKTGQALVCGIYEEPVTPGQCNMVVERLGDYLLEQGM.

Cys13 and Cys118 are disulfide-bonded. The short motif at Ala84 to Thr100 is the Involved in PIP2 interaction element. Thr114 is modified (phosphothreonine).

It belongs to the profilin family. As to quaternary structure, occurs in many kinds of cells as a complex with monomeric actin in a 1:1 ratio. Post-translationally, phosphorylated by MAP kinases.

It localises to the cytoplasm. The protein localises to the cytoskeleton. Binds to actin and affects the structure of the cytoskeleton. At high concentrations, profilin prevents the polymerization of actin, whereas it enhances it at low concentrations. This is Profilin-2 from Olea europaea (Common olive).